The chain runs to 176 residues: NAD(P)H-quinone oxidoreductase subunit 6, chloroplastic (176 aa).

Helical transmembrane passes span phenylalanine 10 to proline 30, proline 32 to leucine 52, alanine 61 to methionine 81, leucine 92 to isoleucine 112, and phenylalanine 152 to alanine 172.

The protein belongs to the complex I subunit 6 family. As to quaternary structure, NDH is composed of at least 16 different subunits, 5 of which are encoded in the nucleus.

The protein localises to the plastid. The protein resides in the chloroplast thylakoid membrane. It catalyses the reaction a plastoquinone + NADH + (n+1) H(+)(in) = a plastoquinol + NAD(+) + n H(+)(out). The enzyme catalyses a plastoquinone + NADPH + (n+1) H(+)(in) = a plastoquinol + NADP(+) + n H(+)(out). Functionally, NDH shuttles electrons from NAD(P)H:plastoquinone, via FMN and iron-sulfur (Fe-S) centers, to quinones in the photosynthetic chain and possibly in a chloroplast respiratory chain. The immediate electron acceptor for the enzyme in this species is believed to be plastoquinone. Couples the redox reaction to proton translocation, and thus conserves the redox energy in a proton gradient. The sequence is that of NAD(P)H-quinone oxidoreductase subunit 6, chloroplastic (ndhG) from Solanum bulbocastanum (Wild potato).